A 973-amino-acid chain; its full sequence is Sensor histidine kinase TmoS (973 aa).

The 72-residue stretch at 32–103 folds into the PAS 1 domain; sequence REELARIIFD…NQKRLVEAAS (72 aa). One can recognise a PAC 1 domain in the interval 108 to 162; the sequence is VRCDIEILGKSGGREVIAVDFSLLPIRDEQENIVFLLAEGRNITDKKKAEAMLAL. Positions 187–405 constitute a Histidine kinase 1 domain; it reads KVSHELRTPL…LFQVKLPLNA (219 aa). Phosphohistidine; by autocatalysis is present on H190. Positions 452–567 constitute a Response regulatory domain; it reads RVLIVEDNPD…ELRARVSNLI (116 aa). At D500 the chain carries 4-aspartylphosphate. Residues 611–681 form the PAS 2 domain; it reads SEARWKAVYE…QRLARLLQSG (71 aa). Residues 685–737 enclose the PAC 2 domain; that stretch reads YSVECSYLCKNGSTIWANASVSLMSPRVDEPQVILQIIDDITEKKQAQETLNQ. The region spanning 757–973 is the Histidine kinase 2 domain; it reads YIAHEINQPL…ACFFVSIPVS (217 aa). Phosphohistidine is present on H760.

In terms of processing, autophosphorylated. Activation requires a sequential transfer of a phosphate group from a His in the primary transmitter domain, to an Asp in the receiver domain and to a His in the secondary transmitter domain.

It is found in the cytoplasm. The enzyme catalyses ATP + protein L-histidine = ADP + protein N-phospho-L-histidine.. With respect to regulation, activity is regulated by agonists and antagonists. Binding of agonists such as toluene or benzene to TmoS stimulates autophosphorylation. Toluene causes the most pronounced increase, followed by benzene, chlorobenzene and ethylbenzene. Activity is inhibited by antagonists such as o-xylene, o-chlorotoluene and trimethylbenzene isomers, which bind to TmoS but do not stimulate autophosphorylation. Member of the two-component regulatory system TmoS/TmoT involved in the regulation of toluene degradation. Probably phosphorylates TmoT via a four-step phosphorelay in response to toluene. Can also be induced by benzene and ethylbenzene. This Ectopseudomonas mendocina (Pseudomonas mendocina) protein is Sensor histidine kinase TmoS (tmoS).